A 356-amino-acid polypeptide reads, in one-letter code: Phosphate acyltransferase (356 aa).

This sequence belongs to the PlsX family. Homodimer. Probably interacts with PlsY.

It localises to the cytoplasm. The enzyme catalyses a fatty acyl-[ACP] + phosphate = an acyl phosphate + holo-[ACP]. Its pathway is lipid metabolism; phospholipid metabolism. In terms of biological role, catalyzes the reversible formation of acyl-phosphate (acyl-PO(4)) from acyl-[acyl-carrier-protein] (acyl-ACP). This enzyme utilizes acyl-ACP as fatty acyl donor, but not acyl-CoA. In Stutzerimonas stutzeri (strain A1501) (Pseudomonas stutzeri), this protein is Phosphate acyltransferase.